We begin with the raw amino-acid sequence, 1023 residues long: Solute carrier family 12 member 3 (1023 aa).

The Cytoplasmic portion of the chain corresponds to 1–134; sequence MELPGDGVHL…EPPPEPPRFG (134 aa). Residues 91 to 131 are disordered; the sequence is DPEQDDFKPPMYEETAGERMGGGDSSEEEEEEHKEPPPEPP. Residues 135 to 164 traverse the membrane as a discontinuously helical segment; that stretch reads WVQGVMIRCMLNIWGVILYLRLPWITAQAG. Na(+)-binding residues include leucine 145 and tryptophan 148. The helical transmembrane segment at 165–186 threads the bilayer; that stretch reads IGLTWVIILLSSFITGITGLST. Topologically, residues 187 to 217 are cytoplasmic; that stretch reads SAIATNGKVKGGGTYFLISRSLGPELGGSIG. Residues 218–240 form a helical membrane-spanning segment; it reads LIFAFANAVAVAMHTVGFAETVT. Over 241–252 the chain is Extracellular; it reads DLMRENGVVMVD. 2 helical membrane passes run 253–277 and 278–300; these read PINDIRIVGVITVTCLLGISMAGME and WESKAQVLFFLVIMVSFVNYIVG. Over 301–335 the chain is Extracellular; that stretch reads TIIPASPQKQAKGFFSYKAEIFAANFVPGWRGKEG. The chain crosses the membrane as a discontinuously helical span at residues 336–357; it reads SFFGMFSIFFPSATGILAGANI. Positions 350, 351, and 352 each coordinate chloride. The Cytoplasmic segment spans residues 358 to 368; it reads SGDLKDPTVAI. The helical transmembrane segment at 369-390 threads the bilayer; sequence PRGTLMAIFWTTISYLIISATI. Over 391-452 the chain is Extracellular; the sequence is GACVVRDASG…YQSMSLVSAF (62 aa). N-linked (GlcNAc...) asparagine glycans are attached at residues asparagine 403 and asparagine 414. 2 disulfides stabilise this stretch: cysteine 415/cysteine 420 and cysteine 429/cysteine 435. The N-linked (GlcNAc...) asparagine glycan is linked to asparagine 432. Residues 453 to 476 form a helical membrane-spanning segment; the sequence is APLISAGIFGATLSSALACLVSAP. Alanine 463, serine 466, and serine 467 together coordinate Na(+). Residues 477–506 lie on the Cytoplasmic side of the membrane; sequence KVFQCLCKDQLYPLIGFFGKGYGKNAEPLR. A helical membrane pass occupies residues 507–521; the sequence is AYLLTYVIAVCFVLI. At 522 to 526 the chain is on the extracellular side; sequence AELNT. The chain crosses the membrane as a helical span at residues 527–543; sequence IAPIISNFFLCSYALIN. Residue tyrosine 539 participates in chloride binding. Residues 544 to 566 lie on the Cytoplasmic side of the membrane; sequence FSCFHASVTNSPGWRPSFRFYSK. 2 helical membrane-spanning segments follow: residues 567–586 and 587–598; these read WLSLLGAVCCVVIMFLLTWW and AALIAFGVVFFL. At 599-1023 the chain is on the cytoplasmic side; sequence LGYTLYKKPA…QENVLTFYCQ (425 aa). A scissor helix region spans residues 614–629; sequence SVQASSYSMALNQCVG. 5 residues coordinate ATP: leucine 647, arginine 654, valine 676, glycine 733, and leucine 772.

Belongs to the SLC12A transporter family. In terms of assembly, homodimer; adopts a domain-swap conformation at the scissor helices connecting the transmembrane domain and C-terminal domain. As to expression, expressed in urinary bladder, intestine, ovary, skeletal muscle, eye, brain, and kidney.

It localises to the cell membrane. It carries out the reaction chloride(out) + Na(+)(out) = chloride(in) + Na(+)(in). With respect to regulation, inhibited by thiazide-type diuretics including polythiazide, metolazone, cyclothiazide, hydrochlorothiazide and chlorthalidone. Thiazide drugs, specifically inhibit SLC12A3/NCC transporter activity by competing with chloride for binding. In terms of biological role, electroneutral sodium and chloride ion cotransporter, with a coupling ratio 1 Na(+):1 Cl(-). Mediates sodium and chloride reabsorption. In Pseudopleuronectes americanus (Winter flounder), this protein is Solute carrier family 12 member 3 (slc12a3).